The following is a 161-amino-acid chain: Troponin C, slow skeletal and cardiac muscles (161 aa).

Met1 bears the N-acetylmethionine mark. 4 consecutive EF-hand domains span residues 16–51 (QKNE…LGQN), 52–87 (PTPE…CMKD), 92–127 (KSEE…TGET), and 128–161 (ITED…KGVE). Residues Asp65, Asp67, Ser69, Thr71, and Glu76 each coordinate Ca(2+). Phosphoserine is present on Ser98. Residues Asp105, Asn107, Asp109, Tyr111, Glu116, Asp141, Asn143, Asp145, Arg147, and Glu152 each coordinate Ca(2+).

The protein belongs to the troponin C family.

Functionally, troponin is the central regulatory protein of striated muscle contraction. Tn consists of three components: Tn-I which is the inhibitor of actomyosin ATPase, Tn-T which contains the binding site for tropomyosin and Tn-C. The binding of calcium to Tn-C abolishes the inhibitory action of Tn on actin filaments. The protein is Troponin C, slow skeletal and cardiac muscles (TNNC1) of Homo sapiens (Human).